A 60-amino-acid polypeptide reads, in one-letter code: UPF0434 protein PC1_1771 (60 aa).

This sequence belongs to the UPF0434 family.

The sequence is that of UPF0434 protein PC1_1771 from Pectobacterium carotovorum subsp. carotovorum (strain PC1).